The primary structure comprises 445 residues: Methylenetetrahydrofolate--tRNA-(uracil-5-)-methyltransferase TrmFO (445 aa).

9–14 (GGGLAG) provides a ligand contact to FAD.

Belongs to the MnmG family. TrmFO subfamily. The cofactor is FAD.

The protein localises to the cytoplasm. It carries out the reaction uridine(54) in tRNA + (6R)-5,10-methylene-5,6,7,8-tetrahydrofolate + NADH + H(+) = 5-methyluridine(54) in tRNA + (6S)-5,6,7,8-tetrahydrofolate + NAD(+). The enzyme catalyses uridine(54) in tRNA + (6R)-5,10-methylene-5,6,7,8-tetrahydrofolate + NADPH + H(+) = 5-methyluridine(54) in tRNA + (6S)-5,6,7,8-tetrahydrofolate + NADP(+). In terms of biological role, catalyzes the folate-dependent formation of 5-methyl-uridine at position 54 (M-5-U54) in all tRNAs. This Aquifex aeolicus (strain VF5) protein is Methylenetetrahydrofolate--tRNA-(uracil-5-)-methyltransferase TrmFO.